The sequence spans 247 residues: VQ motif-containing protein 4 (247 aa).

The tract at residues 1 to 128 (MENSPRYREA…SSSSASGFRL (128 aa)) is disordered. The residue at position 16 (Ser-16) is a Phosphoserine. A compositionally biased stretch (low complexity) spans 21 to 37 (NSNNSCGMSSSSESNKP). Polar residues-rich tracts occupy residues 48 to 75 (RSESGNPYPTTFVQADTSSFKQVVQMLT) and 87 to 106 (LKPNPTHHQPDPRSTPSSFS). The short motif at 67-76 (FKQVVQMLTG) is the VQ element. Phosphoserine is present on residues Ser-106, Ser-155, Ser-163, Ser-165, and Ser-175. Residue Thr-178 is modified to Phosphothreonine. Positions 184–247 (PFDRSGSSNQ…VSGSSSASTS (64 aa)) are disordered. Ser-194 is subject to Phosphoserine. Basic and acidic residues predominate over residues 200 to 210 (AEEKAMKERGF). Ser-215 bears the Phosphoserine mark. Residues Thr-219 and Thr-234 each carry the phosphothreonine modification. 3 positions are modified to phosphoserine: Ser-235, Ser-239, and Ser-243. Over residues 236–247 (PRVSGSSSASTS) the composition is skewed to polar residues.

As to quaternary structure, interacts with MPK3 and MPK6. Post-translationally, phosphorylated on serine and threonine residues by MPK6 following treatment with the pathogen-associated molecular pattern (PAMP) flg22. MAP kinase-mediated phosphorylation after PAMP elicitation causes degradation of VQ4, allowing WRKY33 to promote transcription from defense genes.

It is found in the nucleus. Its function is as follows. Acts as a negative regulator of WRKY33 transcription factor activity in the promotion of defense gene expression. Acts as a negative regulator of pathogen-associated molecular pattern (PAMP)-induced responses to modulate resistance to pathogens. This is VQ motif-containing protein 4 from Arabidopsis thaliana (Mouse-ear cress).